Here is a 368-residue protein sequence, read N- to C-terminus: MTGAQRWVVKIGSALLTADGKGLDRNAMGVWVEQMAALHEAGVELVLVSSGAVAAGMSRLGWTARPSAMHELQAAAAIGQMGLVQAWESSFAEHGRHTAQILLTHDDLSDRKRYLNARSTLRTLVELGVVPVINENDTVVTDEIRFGDNDTLAALVANLVEADLLVILTDRDGMFDADPRNNPEAQLIYEARADDPALDAVAGGTGGALGRGGMQTKLRAARLAARSGAHTVIVGGRIERVLARLKGGERLGTLLSPERGMLAARKQWLAGHLQTRGTLVLDDGAVAALAKDQKSLLPVGVKLVQGSFRRGEMVVCVASDGREIARGLSNYSAIEAQKIIGHSSESIVRELGYMAEPELIHRDNLILV.

Residue lysine 10 coordinates ATP. Positions 50, 137, and 149 each coordinate substrate. 169–170 serves as a coordination point for ATP; it reads TD. The PUA domain maps to 276 to 354; the sequence is RGTLVLDDGA…ESIVRELGYM (79 aa).

This sequence belongs to the glutamate 5-kinase family.

It is found in the cytoplasm. The enzyme catalyses L-glutamate + ATP = L-glutamyl 5-phosphate + ADP. It participates in amino-acid biosynthesis; L-proline biosynthesis; L-glutamate 5-semialdehyde from L-glutamate: step 1/2. Its function is as follows. Catalyzes the transfer of a phosphate group to glutamate to form L-glutamate 5-phosphate. In Pseudomonas savastanoi pv. phaseolicola (strain 1448A / Race 6) (Pseudomonas syringae pv. phaseolicola (strain 1448A / Race 6)), this protein is Glutamate 5-kinase.